Consider the following 575-residue polypeptide: Phosphoenolpyruvate-protein phosphotransferase (575 aa).

The active-site Tele-phosphohistidine intermediate is the His-189. Arg-296 and Arg-332 together coordinate phosphoenolpyruvate. Mg(2+) contacts are provided by Glu-431 and Asp-455. Phosphoenolpyruvate-binding positions include 454-455 (ND) and Arg-465. The active-site Proton donor is the Cys-502.

The protein belongs to the PEP-utilizing enzyme family. Homodimer. Requires Mg(2+) as cofactor.

It localises to the cytoplasm. It catalyses the reaction L-histidyl-[protein] + phosphoenolpyruvate = N(pros)-phospho-L-histidyl-[protein] + pyruvate. General (non sugar-specific) component of the phosphoenolpyruvate-dependent sugar phosphotransferase system (sugar PTS). This major carbohydrate active-transport system catalyzes the phosphorylation of incoming sugar substrates concomitantly with their translocation across the cell membrane. Enzyme I transfers the phosphoryl group from phosphoenolpyruvate (PEP) to the phosphoryl carrier protein (HPr). The sequence is that of Phosphoenolpyruvate-protein phosphotransferase (ptsI) from Haemophilus influenzae (strain ATCC 51907 / DSM 11121 / KW20 / Rd).